An 88-amino-acid chain; its full sequence is Large ribosomal subunit protein bL31B (88 aa).

Belongs to the bacterial ribosomal protein bL31 family. Type B subfamily. In terms of assembly, part of the 50S ribosomal subunit.

This Burkholderia orbicola (strain MC0-3) protein is Large ribosomal subunit protein bL31B.